We begin with the raw amino-acid sequence, 195 residues long: Probable GTP-binding protein EngB (195 aa).

Residues Gly22 to Arg195 enclose the EngB-type G domain. GTP-binding positions include Gly30 to Ser37, Gly57 to Thr61, Asp75 to Gly78, Thr142 to Asp145, and Phe174 to Ser176. The Mg(2+) site is built by Ser37 and Thr59.

It belongs to the TRAFAC class TrmE-Era-EngA-EngB-Septin-like GTPase superfamily. EngB GTPase family. Mg(2+) serves as cofactor.

In terms of biological role, necessary for normal cell division and for the maintenance of normal septation. Functionally, binds GTP and GDP. The protein is Probable GTP-binding protein EngB of Bacillus subtilis (strain 168).